The following is a 365-amino-acid chain: Chorismate synthase (365 aa).

Arg46 is an NADP(+) binding site. FMN is bound by residues 123–125 (RSS), 241–242 (NG), Gly281, 296–300 (KPTPS), and Arg322.

This sequence belongs to the chorismate synthase family. Homotetramer. The cofactor is FMNH2.

It carries out the reaction 5-O-(1-carboxyvinyl)-3-phosphoshikimate = chorismate + phosphate. The protein operates within metabolic intermediate biosynthesis; chorismate biosynthesis; chorismate from D-erythrose 4-phosphate and phosphoenolpyruvate: step 7/7. Functionally, catalyzes the anti-1,4-elimination of the C-3 phosphate and the C-6 proR hydrogen from 5-enolpyruvylshikimate-3-phosphate (EPSP) to yield chorismate, which is the branch point compound that serves as the starting substrate for the three terminal pathways of aromatic amino acid biosynthesis. This reaction introduces a second double bond into the aromatic ring system. The polypeptide is Chorismate synthase (Helicobacter pylori (strain G27)).